Reading from the N-terminus, the 509-residue chain is Maturase K (509 aa).

This sequence belongs to the intron maturase 2 family. MatK subfamily.

It localises to the plastid. The protein localises to the chloroplast. Its function is as follows. Usually encoded in the trnK tRNA gene intron. Probably assists in splicing its own and other chloroplast group II introns. The polypeptide is Maturase K (Clematis lasiantha (Pipestem clematis)).